Here is a 633-residue protein sequence, read N- to C-terminus: Threonine--tRNA ligase (633 aa).

The 61-residue stretch at 1–61 (MINVYFSDNS…TEDCKFEVIT (61 aa)) folds into the TGS domain. Positions 242-533 (DHRKIGKELE…LIEHHSGKLP (292 aa)) are catalytic. Residues cysteine 333, histidine 384, and histidine 510 each coordinate Zn(2+).

Belongs to the class-II aminoacyl-tRNA synthetase family. Homodimer. Requires Zn(2+) as cofactor.

It is found in the cytoplasm. The catalysed reaction is tRNA(Thr) + L-threonine + ATP = L-threonyl-tRNA(Thr) + AMP + diphosphate + H(+). Functionally, catalyzes the attachment of threonine to tRNA(Thr) in a two-step reaction: L-threonine is first activated by ATP to form Thr-AMP and then transferred to the acceptor end of tRNA(Thr). Also edits incorrectly charged L-seryl-tRNA(Thr). The polypeptide is Threonine--tRNA ligase (Ehrlichia ruminantium (strain Welgevonden)).